Consider the following 127-residue polypeptide: Major sperm protein isoform beta (127 aa).

N-acetylalanine is present on Ala2. The 118-residue stretch at 9–126 folds into the MSP domain; it reads DINTQPGSKI…RRKNLPIEYN (118 aa).

As to quaternary structure, forms filaments 10 nm wide, with a characteristic substructure repeating axially at 9 nm. Sperm.

Its subcellular location is the cell projection. The protein resides in the pseudopodium. The protein localises to the cytoplasm. It is found in the cytoskeleton. In terms of biological role, central component in molecular interactions underlying sperm crawling. Forms an extensive filament system that extends from sperm villipoda, along the leading edge of the pseudopod. This Ascaris suum (Pig roundworm) protein is Major sperm protein isoform beta.